The sequence spans 529 residues: MDSWLLSLLIAGVVFAIFQLRTVGQRPAGCPPGPPTLPIIGNLHQIPNKNTHVQFKKWADEYGPVYSLVLGTTIMIVLSSDAAIKDLTRGVESTHRAQICISVPWQAAGFAWSLCDTWRQFRKLFHSFTHLGAAKSYVPYQDLESTSMMVSLLDNPDLVFDHIRRFTTSLSTQMIYGFRTPRTDDPMLLQMYDGFEKWSTLIGAGPAKLLDVFPVLRSLPAAIRPLYSHALALQKKKSELSFGLWQDAKRKVEDKTSKPCFCVGLVQAQAEEGLTDHVAGMIASSALEAGSDTTASTLTGFLQAMVLYPAAQKSAQASIDRACADRFPTIADMDNPETQYIHACVKESLRWMPTTILGVPHAVTVDDEYMGYRIPKGAGVVYNVWAVHMDPRRYPNPRAFDPTRYMQDLASSAESAQNSDVSQRDHFAFGAGRRICVGMHVVDRSMFLVIARLMWAFDISKAVDVDGDDFVGGILVRPRPFPVKITPRSESRAAKVREAWAACQVLLDQGQQWKQVPEGMPFTTYTGGD.

Residues 4 to 24 traverse the membrane as a helical segment; sequence WLLSLLIAGVVFAIFQLRTVG. C436 provides a ligand contact to heme.

This sequence belongs to the cytochrome P450 family. It depends on heme as a cofactor.

The protein resides in the membrane. Functionally, cytochrome P450 monooxygenase; part of the gene cluster that mediates the biosynthesis of the enfumafungin-type antibiotic fuscoatroside. Four enzymes are sufficient to produce fuscoatroside: the terpene cyclase-glycosyl transferase fusion protein fsoAthe cytochrome P450 monoxygenases fsoD and fsoE, and the acetyltransferase fsoF; the cytochrome P450 monooxygenase fsoB and the glucose oxidase-like protein fsoC do not seem to play a role in biosynthesis of fuscoatroside. This chain is Cytochrome P450 monooxygenase fsoB, found in Humicola fuscoatra.